The sequence spans 262 residues: Hydroxyethylthiazole kinase (262 aa).

Residue methionine 40 coordinates substrate. The ATP site is built by lysine 116 and threonine 162. Glycine 189 is a binding site for substrate.

Belongs to the Thz kinase family. The cofactor is Mg(2+).

The catalysed reaction is 5-(2-hydroxyethyl)-4-methylthiazole + ATP = 4-methyl-5-(2-phosphooxyethyl)-thiazole + ADP + H(+). It participates in cofactor biosynthesis; thiamine diphosphate biosynthesis; 4-methyl-5-(2-phosphoethyl)-thiazole from 5-(2-hydroxyethyl)-4-methylthiazole: step 1/1. Catalyzes the phosphorylation of the hydroxyl group of 4-methyl-5-beta-hydroxyethylthiazole (THZ). This chain is Hydroxyethylthiazole kinase, found in Clostridioides difficile (strain 630) (Peptoclostridium difficile).